We begin with the raw amino-acid sequence, 96 residues long: UPF0235 protein VIBHAR_03581 (96 aa).

Belongs to the UPF0235 family.

The polypeptide is UPF0235 protein VIBHAR_03581 (Vibrio campbellii (strain ATCC BAA-1116)).